A 969-amino-acid chain; its full sequence is Dual serine/threonine and tyrosine protein kinase (969 aa).

Positions 7 to 37 (QEFRRYLRNRNQLQHVLEETQQALELINLEN) form a coiled coil. Residues 632 to 894 (PHCAEEIGRG…PLLGAIVPVL (263 aa)) form the Protein kinase domain. Residues 638–646 (IGRGQYGIV) and K662 each bind ATP. The active-site Proton acceptor is D760. The tract at residues 904 to 945 (SKSLQEVSSDKLQESSTDSRNPALALAEPYNQRGTVVSPPPT) is disordered.

This sequence belongs to the protein kinase superfamily. Ser/Thr protein kinase family.

It localises to the cytoplasm. It carries out the reaction L-seryl-[protein] + ATP = O-phospho-L-seryl-[protein] + ADP + H(+). It catalyses the reaction L-threonyl-[protein] + ATP = O-phospho-L-threonyl-[protein] + ADP + H(+). The catalysed reaction is L-tyrosyl-[protein] + ATP = O-phospho-L-tyrosyl-[protein] + ADP + H(+). This Apis mellifera (Honeybee) protein is Dual serine/threonine and tyrosine protein kinase.